The following is a 257-amino-acid chain: uncharacterized protein (257 aa).

The N-terminal stretch at 1 to 22 (MGYLKRFALYISVMILMFAIAG) is a signal peptide. Cysteine 23 carries the N-palmitoyl cysteine lipid modification. Residue cysteine 23 is the site of S-diacylglycerol cysteine attachment.

It belongs to the staphylococcal tandem lipoprotein family.

The protein resides in the cell membrane. This is an uncharacterized protein from Staphylococcus aureus (strain MRSA252).